Here is a 175-residue protein sequence, read N- to C-terminus: Protein-export protein SecB (175 aa).

It belongs to the SecB family. Homotetramer, a dimer of dimers. One homotetramer interacts with 1 SecA dimer.

It localises to the cytoplasm. Functionally, one of the proteins required for the normal export of preproteins out of the cell cytoplasm. It is a molecular chaperone that binds to a subset of precursor proteins, maintaining them in a translocation-competent state. It also specifically binds to its receptor SecA. In Ehrlichia chaffeensis (strain ATCC CRL-10679 / Arkansas), this protein is Protein-export protein SecB.